Reading from the N-terminus, the 298-residue chain is Acetyl-coenzyme A carboxylase carboxyl transferase subunit beta (298 aa).

A CoA carboxyltransferase N-terminal domain is found at 25–295 (VWAKCANCGE…SADHREHVVA (271 aa)). 4 residues coordinate Zn(2+): C29, C32, C48, and C51. The C4-type zinc finger occupies 29 to 51 (CANCGELTYQKQFNDALKVCPKC).

It belongs to the AccD/PCCB family. As to quaternary structure, acetyl-CoA carboxylase is a heterohexamer composed of biotin carboxyl carrier protein (AccB), biotin carboxylase (AccC) and two subunits each of ACCase subunit alpha (AccA) and ACCase subunit beta (AccD). Requires Zn(2+) as cofactor.

It localises to the cytoplasm. It catalyses the reaction N(6)-carboxybiotinyl-L-lysyl-[protein] + acetyl-CoA = N(6)-biotinyl-L-lysyl-[protein] + malonyl-CoA. Its pathway is lipid metabolism; malonyl-CoA biosynthesis; malonyl-CoA from acetyl-CoA: step 1/1. In terms of biological role, component of the acetyl coenzyme A carboxylase (ACC) complex. Biotin carboxylase (BC) catalyzes the carboxylation of biotin on its carrier protein (BCCP) and then the CO(2) group is transferred by the transcarboxylase to acetyl-CoA to form malonyl-CoA. This chain is Acetyl-coenzyme A carboxylase carboxyl transferase subunit beta, found in Herpetosiphon aurantiacus (strain ATCC 23779 / DSM 785 / 114-95).